The chain runs to 424 residues: Catabolic NAD-specific glutamate dehydrogenase RocG (424 aa).

Substrate-binding residues include K80 and K104. K116 acts as the Proton donor in catalysis. Residues T200 and N231 each coordinate NAD(+). Residue S358 coordinates substrate.

It belongs to the Glu/Leu/Phe/Val dehydrogenases family. Homohexamer. Interacts with transcriptional regulator GltC.

It carries out the reaction L-glutamate + NAD(+) + H2O = 2-oxoglutarate + NH4(+) + NADH + H(+). Functionally, devoted to catabolic function of glutamate (and other amino acids of the glutamate family) utilization as sole nitrogen source. It is not involved in anabolic function of glutamate biosynthesis since B.subtilis possesses only one route of glutamate biosynthesis from ammonia, catalyzed by glutamate synthase. Wild-type cells are unable to utilize glutamate or glutamine as a sole carbon source; thus RocG does not function physiologically to synthesize glutamate, but it is involved in the utilization of arginine, and proline as carbon or nitrogen source. The catabolic RocG is essential for controlling gltAB expression via an inhibitory interactions with the transcriptional regulator GltC in response to the availability of sugars. The protein is Catabolic NAD-specific glutamate dehydrogenase RocG of Bacillus subtilis (strain 168).